Reading from the N-terminus, the 498-residue chain is Glycerol kinase (498 aa).

Thr11 contributes to the ADP binding site. ATP is bound by residues Thr11, Ser12, and Ser13. Sn-glycerol 3-phosphate is bound at residue Thr11. Arg15 provides a ligand contact to ADP. Residues Arg81, Glu82, Tyr133, and Asp242 each contribute to the sn-glycerol 3-phosphate site. 5 residues coordinate glycerol: Arg81, Glu82, Tyr133, Asp242, and Gln243. ADP-binding residues include Thr264 and Gly307. Residues Thr264, Gly307, Gln311, and Gly412 each contribute to the ATP site. 2 residues coordinate ADP: Gly412 and Asn416.

It belongs to the FGGY kinase family.

The enzyme catalyses glycerol + ATP = sn-glycerol 3-phosphate + ADP + H(+). It functions in the pathway polyol metabolism; glycerol degradation via glycerol kinase pathway; sn-glycerol 3-phosphate from glycerol: step 1/1. Inhibited by fructose 1,6-bisphosphate (FBP). Functionally, key enzyme in the regulation of glycerol uptake and metabolism. Catalyzes the phosphorylation of glycerol to yield sn-glycerol 3-phosphate. This is Glycerol kinase from Acidovorax sp. (strain JS42).